A 68-amino-acid chain; its full sequence is Conotoxin Cal14.13c (68 aa).

The signal sequence occupies residues 1–20; sequence MKLCVVXVLLMLAMPFNGGE. The propeptide occupies 21 to 68; it reads ASRFFNQHARSQRSGMKTRGIWCDPPCPEGETCRGGECSDEFNGDLGG. Residue L66 is modified to Leucine amide.

In terms of processing, contains 2 disulfide bonds. In terms of tissue distribution, expressed by the venom duct.

It localises to the secreted. In terms of biological role, probable neurotoxin with unknown target. Possibly targets ion channels. The chain is Conotoxin Cal14.13c from Californiconus californicus (California cone).